We begin with the raw amino-acid sequence, 241 residues long: 2,3-bisphosphoglycerate-dependent phosphoglycerate mutase (241 aa).

H12 serves as the catalytic Tele-phosphohistidine intermediate. Residues 24–25, R61, 117–120, and K128 each bind substrate; these read SG and ERYY. Residue E117 is the Proton donor/acceptor of the active site.

The protein belongs to the phosphoglycerate mutase family. BPG-dependent PGAM subfamily.

The catalysed reaction is (2R)-2-phosphoglycerate = (2R)-3-phosphoglycerate. The protein operates within carbohydrate degradation; glycolysis; pyruvate from D-glyceraldehyde 3-phosphate: step 3/5. Its function is as follows. Catalyzes the interconversion of 2-phosphoglycerate and 3-phosphoglycerate. This is 2,3-bisphosphoglycerate-dependent phosphoglycerate mutase from Methanosarcina mazei (strain ATCC BAA-159 / DSM 3647 / Goe1 / Go1 / JCM 11833 / OCM 88) (Methanosarcina frisia).